Reading from the N-terminus, the 423-residue chain is UDP-N-acetylglucosamine 1-carboxyvinyltransferase (423 aa).

22–23 provides a ligand contact to phosphoenolpyruvate; the sequence is KN. Arginine 98 is a binding site for UDP-N-acetyl-alpha-D-glucosamine. The active-site Proton donor is the cysteine 122. 2-(S-cysteinyl)pyruvic acid O-phosphothioketal is present on cysteine 122. UDP-N-acetyl-alpha-D-glucosamine-binding positions include 127-131, aspartate 311, and isoleucine 333; that span reads RPVDQ.

Belongs to the EPSP synthase family. MurA subfamily.

It is found in the cytoplasm. The enzyme catalyses phosphoenolpyruvate + UDP-N-acetyl-alpha-D-glucosamine = UDP-N-acetyl-3-O-(1-carboxyvinyl)-alpha-D-glucosamine + phosphate. The protein operates within cell wall biogenesis; peptidoglycan biosynthesis. Cell wall formation. Adds enolpyruvyl to UDP-N-acetylglucosamine. This chain is UDP-N-acetylglucosamine 1-carboxyvinyltransferase, found in Stenotrophomonas maltophilia (strain R551-3).